Reading from the N-terminus, the 137-residue chain is Large ribosomal subunit protein eL28 (137 aa).

The residue at position 2 (Ser2) is an N-acetylserine. Glycyl lysine isopeptide (Lys-Gly) (interchain with G-Cter in SUMO2) cross-links involve residues Lys58 and Lys65. Phosphoserine is present on Ser115.

This sequence belongs to the eukaryotic ribosomal protein eL28 family. As to quaternary structure, component of the large ribosomal subunit.

The protein resides in the cytoplasm. Component of the large ribosomal subunit. The ribosome is a large ribonucleoprotein complex responsible for the synthesis of proteins in the cell. The polypeptide is Large ribosomal subunit protein eL28 (Rpl28) (Rattus norvegicus (Rat)).